The following is a 227-amino-acid chain: Cytochrome c oxidase subunit 2 (227 aa).

Residues 1–14 lie on the Mitochondrial intermembrane side of the membrane; it reads MAYPFQLGLQDATS. A helical transmembrane segment spans residues 15–45; it reads PIMEELMNFHDHTLMIVFLISSLVLYIISLM. Over 46-59 the chain is Mitochondrial matrix; sequence LTTKLTHTSTMDAQ. The helical transmembrane segment at 60 to 87 threads the bilayer; that stretch reads EVETIWTILPAAILILIALPSLRILYMM. The Mitochondrial intermembrane portion of the chain corresponds to 88–227; that stretch reads DEINNPVLTV…YFENWSASMI (140 aa). 6 residues coordinate Cu cation: histidine 161, cysteine 196, glutamate 198, cysteine 200, histidine 204, and methionine 207. Glutamate 198 serves as a coordination point for Mg(2+). The residue at position 218 (tyrosine 218) is a Phosphotyrosine.

Belongs to the cytochrome c oxidase subunit 2 family. Component of the cytochrome c oxidase (complex IV, CIV), a multisubunit enzyme composed of 14 subunits. The complex is composed of a catalytic core of 3 subunits MT-CO1, MT-CO2 and MT-CO3, encoded in the mitochondrial DNA, and 11 supernumerary subunits COX4I, COX5A, COX5B, COX6A, COX6B, COX6C, COX7A, COX7B, COX7C, COX8 and NDUFA4, which are encoded in the nuclear genome. The complex exists as a monomer or a dimer and forms supercomplexes (SCs) in the inner mitochondrial membrane with NADH-ubiquinone oxidoreductase (complex I, CI) and ubiquinol-cytochrome c oxidoreductase (cytochrome b-c1 complex, complex III, CIII), resulting in different assemblies (supercomplex SCI(1)III(2)IV(1) and megacomplex MCI(2)III(2)IV(2)). Found in a complex with TMEM177, COA6, COX18, COX20, SCO1 and SCO2. Interacts with TMEM177 in a COX20-dependent manner. Interacts with COX20. Interacts with COX16. Requires Cu cation as cofactor.

Its subcellular location is the mitochondrion inner membrane. It carries out the reaction 4 Fe(II)-[cytochrome c] + O2 + 8 H(+)(in) = 4 Fe(III)-[cytochrome c] + 2 H2O + 4 H(+)(out). In terms of biological role, component of the cytochrome c oxidase, the last enzyme in the mitochondrial electron transport chain which drives oxidative phosphorylation. The respiratory chain contains 3 multisubunit complexes succinate dehydrogenase (complex II, CII), ubiquinol-cytochrome c oxidoreductase (cytochrome b-c1 complex, complex III, CIII) and cytochrome c oxidase (complex IV, CIV), that cooperate to transfer electrons derived from NADH and succinate to molecular oxygen, creating an electrochemical gradient over the inner membrane that drives transmembrane transport and the ATP synthase. Cytochrome c oxidase is the component of the respiratory chain that catalyzes the reduction of oxygen to water. Electrons originating from reduced cytochrome c in the intermembrane space (IMS) are transferred via the dinuclear copper A center (CU(A)) of subunit 2 and heme A of subunit 1 to the active site in subunit 1, a binuclear center (BNC) formed by heme A3 and copper B (CU(B)). The BNC reduces molecular oxygen to 2 water molecules using 4 electrons from cytochrome c in the IMS and 4 protons from the mitochondrial matrix. In Praomys tullbergi (Tullberg's soft-furred rat), this protein is Cytochrome c oxidase subunit 2 (MT-CO2).